The following is a 1003-amino-acid chain: Phosphoenolpyruvate carboxylase (1003 aa).

Positions 1–24 (MIMTVSDPGGSSMSSSSAITPESE) are disordered. Catalysis depends on residues H190 and K646.

The protein belongs to the PEPCase type 1 family. Requires Mg(2+) as cofactor.

The enzyme catalyses oxaloacetate + phosphate = phosphoenolpyruvate + hydrogencarbonate. Its function is as follows. Forms oxaloacetate, a four-carbon dicarboxylic acid source for the tricarboxylic acid cycle. This chain is Phosphoenolpyruvate carboxylase, found in Synechococcus sp. (strain WH7803).